The following is a 168-amino-acid chain: Auxin-responsive protein IAA1 (168 aa).

A disordered region spans residues 1 to 74 (MEVTNGLNLK…NRKNNNNKNV (74 aa)). An EAR-like (transcriptional repression) motif is present at residues 14-18 (LRLGL). Positions 23 to 34 (EEQQLELSCVRS) are enriched in polar residues. A PB1 domain is found at 74-161 (VSYVKVSMDG…SCQKLRIMKG (88 aa)).

It belongs to the Aux/IAA family. As to quaternary structure, homodimers and heterodimers. Interacts with the auxin-responsive protein IAA2. Interacts with TPL. Post-translationally, phosphorylated by phytochrome A in vitro. Preferentially expressed in stems, leaves and flowers.

Its subcellular location is the nucleus. In terms of biological role, aux/IAA proteins are short-lived transcriptional factors that function as repressors of early auxin response genes at low auxin concentrations. Repression is thought to result from the interaction with auxin response factors (ARFs), proteins that bind to the auxin-responsive promoter element (AuxRE). Formation of heterodimers with ARF proteins may alter their ability to modulate early auxin response genes expression. The sequence is that of Auxin-responsive protein IAA1 (IAA1) from Arabidopsis thaliana (Mouse-ear cress).